We begin with the raw amino-acid sequence, 104 residues long: Pyrimidine/purine nucleoside phosphorylase (104 aa).

It belongs to the nucleoside phosphorylase PpnP family.

The enzyme catalyses a purine D-ribonucleoside + phosphate = a purine nucleobase + alpha-D-ribose 1-phosphate. It catalyses the reaction adenosine + phosphate = alpha-D-ribose 1-phosphate + adenine. The catalysed reaction is cytidine + phosphate = cytosine + alpha-D-ribose 1-phosphate. It carries out the reaction guanosine + phosphate = alpha-D-ribose 1-phosphate + guanine. The enzyme catalyses inosine + phosphate = alpha-D-ribose 1-phosphate + hypoxanthine. It catalyses the reaction thymidine + phosphate = 2-deoxy-alpha-D-ribose 1-phosphate + thymine. The catalysed reaction is uridine + phosphate = alpha-D-ribose 1-phosphate + uracil. It carries out the reaction xanthosine + phosphate = alpha-D-ribose 1-phosphate + xanthine. Catalyzes the phosphorolysis of diverse nucleosides, yielding D-ribose 1-phosphate and the respective free bases. Can use uridine, adenosine, guanosine, cytidine, thymidine, inosine and xanthosine as substrates. Also catalyzes the reverse reactions. The polypeptide is Pyrimidine/purine nucleoside phosphorylase (Geotalea uraniireducens (strain Rf4) (Geobacter uraniireducens)).